The primary structure comprises 1192 residues: Chromosome partition protein Smc (1192 aa).

Pro31 to Asn38 serves as a coordination point for ATP. 4 coiled-coil regions span residues Ala164–Val197, Leu234–Leu292, Ser333–Glu369, and Glu396–Val464. Residues Lys522–Gly636 enclose the SMC hinge domain. 3 coiled-coil regions span residues Arg676–His736, Glu772–Ala902, and Gly986–Asp1030.

The protein belongs to the SMC family. In terms of assembly, homodimer.

Its subcellular location is the cytoplasm. Functionally, required for chromosome condensation and partitioning. The chain is Chromosome partition protein Smc from Rhodopirellula baltica (strain DSM 10527 / NCIMB 13988 / SH1).